The chain runs to 348 residues: LIM domain-containing protein unc-97 (348 aa).

LIM zinc-binding domains follow at residues 21-73 (CVRC…CEHD), 82-132 (CGKC…CREC), 146-196 (CHKC…CLRC), 205-255 (CGAC…CEQH), and 264-315 (CFKC…CKRC).

Interacts with unc-98. Component of an integrin containing attachment complex, composed of at least pat-2, pat-3, pat-4, pat-6, unc-52, unc-97 and unc-112. As to expression, restricted to tissue types that attach to the hypodermis, specifically body wall muscles, vulval muscles, and mechanosensory neurons.

It localises to the cell junction. Its subcellular location is the adherens junction. The protein resides in the nucleus. Functionally, component of an integrin containing attachment complex, which is required for muscle development and maintenance. Probably function in adherens junction. Affects the structural integrity of the integrin containing muscle adherens junctions and contributes to the mechanosensory functions of touch neurons. This Caenorhabditis elegans protein is LIM domain-containing protein unc-97.